A 569-amino-acid polypeptide reads, in one-letter code: Potassium-transporting ATPase potassium-binding subunit (569 aa).

The next 10 membrane-spanning stretches (helical) occupy residues leucine 3–leucine 23, alanine 68–leucine 88, valine 136–valine 156, valine 179–valine 199, leucine 259–valine 279, histidine 284–tyrosine 304, glycine 384–glycine 404, alanine 422–valine 442, isoleucine 490–glycine 510, and leucine 534–leucine 554.

This sequence belongs to the KdpA family. As to quaternary structure, the system is composed of three essential subunits: KdpA, KdpB and KdpC.

It is found in the cell inner membrane. Functionally, part of the high-affinity ATP-driven potassium transport (or Kdp) system, which catalyzes the hydrolysis of ATP coupled with the electrogenic transport of potassium into the cytoplasm. This subunit binds the periplasmic potassium ions and delivers the ions to the membrane domain of KdpB through an intramembrane tunnel. In Nitratidesulfovibrio vulgaris (strain ATCC 29579 / DSM 644 / CCUG 34227 / NCIMB 8303 / VKM B-1760 / Hildenborough) (Desulfovibrio vulgaris), this protein is Potassium-transporting ATPase potassium-binding subunit.